The chain runs to 41 residues: uncharacterized protein (41 aa).

A helical transmembrane segment spans residues 8-28; it reads IKKIAMFFLGILVGVFIVLFF.

It localises to the membrane. This is an uncharacterized protein from Streptococcus pneumoniae serotype 2 (strain D39 / NCTC 7466).